The primary structure comprises 613 residues: RUN domain-containing protein 1 (613 aa).

The segment at 15 to 36 is disordered; sequence AAVGPKAKDEEEEEEEPLPPCE. T54 bears the Phosphothreonine mark. Positions 57 to 69 are enriched in low complexity; the sequence is LEEATAEEPGAAP. 3 disordered regions span residues 57-79, 140-177, and 305-330; these read LEEA…PGRT, YEGP…RLET, and GKTG…KAED. Phosphoserine is present on residues S71 and S75. Positions 159–177 are enriched in basic and acidic residues; sequence PWLRGEDQSEQEKQERLET. Residues 160-235 adopt a coiled-coil conformation; that stretch reads WLRGEDQSEQ…IKKLDMNLNE (76 aa). The segment covering 309–325 has biased composition (polar residues); it reads NGCSRTGSSRTPPGNSK. In terms of domain architecture, RUN spans 421-602; that stretch reads ELTMAVRKEL…LKFSLPVDLA (182 aa). S497 carries the phosphoserine modification.

Its function is as follows. May play a role as p53/TP53 inhibitor and thus may have oncogenic activity. In Homo sapiens (Human), this protein is RUN domain-containing protein 1 (RUNDC1).